A 423-amino-acid chain; its full sequence is Phospholipase A1-IIalpha (423 aa).

A coiled-coil region spans residues 194–217; the sequence is SAQEQVQGELKRLLELYKDEEISI. Ser-223 serves as the catalytic Acyl-ester intermediate. Catalysis depends on charge relay system residues Ser-223, Asp-290, and His-327. Residues 399–423 form a disordered region; it reads HDDDVDADDNDDSSTSNQLQELNTD. A compositionally biased stretch (acidic residues) spans 401–410; that stretch reads DDVDADDNDD. Over residues 411-423 the composition is skewed to polar residues; that stretch reads SSTSNQLQELNTD.

The protein belongs to the AB hydrolase superfamily. Lipase family.

The protein localises to the cytoplasm. Acylhydrolase that catalyzes the hydrolysis of phospholipids at the sn-1 position. The polypeptide is Phospholipase A1-IIalpha (Arabidopsis thaliana (Mouse-ear cress)).